A 416-amino-acid chain; its full sequence is LL-diaminopimelate aminotransferase (416 aa).

Residues Y25 and G52 each contribute to the substrate site. Pyridoxal 5'-phosphate contacts are provided by residues Y78, S115–K116, Y140, N190, Y221, and S248–S250. 3 residues coordinate substrate: K116, Y140, and N190. The residue at position 251 (K251) is an N6-(pyridoxal phosphate)lysine. R259 is a pyridoxal 5'-phosphate binding site.

It belongs to the class-I pyridoxal-phosphate-dependent aminotransferase family. Homodimer. The cofactor is pyridoxal 5'-phosphate.

The protein resides in the cytoplasm. The catalysed reaction is (2S,6S)-2,6-diaminopimelate + 2-oxoglutarate = (S)-2,3,4,5-tetrahydrodipicolinate + L-glutamate + H2O + H(+). It participates in amino-acid biosynthesis; L-lysine biosynthesis via DAP pathway; LL-2,6-diaminopimelate from (S)-tetrahydrodipicolinate (aminotransferase route): step 1/1. Involved in the synthesis of meso-diaminopimelate (m-DAP or DL-DAP), required for both lysine and peptidoglycan biosynthesis. Catalyzes the direct conversion of tetrahydrodipicolinate to LL-diaminopimelate. This Methanococcus maripaludis (strain DSM 14266 / JCM 13030 / NBRC 101832 / S2 / LL) protein is LL-diaminopimelate aminotransferase (dapL).